We begin with the raw amino-acid sequence, 452 residues long: Phosphoglucosamine mutase (452 aa).

Residue Ser-104 is the Phosphoserine intermediate of the active site. Ser-104, Asp-241, Asp-243, and Asp-245 together coordinate Mg(2+). Ser-104 is subject to Phosphoserine.

This sequence belongs to the phosphohexose mutase family. Mg(2+) is required as a cofactor. In terms of processing, activated by phosphorylation.

It catalyses the reaction alpha-D-glucosamine 1-phosphate = D-glucosamine 6-phosphate. In terms of biological role, catalyzes the conversion of glucosamine-6-phosphate to glucosamine-1-phosphate. This Arthrobacter sp. (strain FB24) protein is Phosphoglucosamine mutase.